The sequence spans 403 residues: Phosphoglycerate kinase (403 aa).

Substrate contacts are provided by residues Asp-21–Asn-23, Arg-36, His-59–Arg-62, Arg-119, and Arg-159. ATP contacts are provided by residues Lys-214, Gly-301, Glu-332, and Gly-359–Ser-362.

The protein belongs to the phosphoglycerate kinase family. In terms of assembly, monomer.

Its subcellular location is the cytoplasm. The catalysed reaction is (2R)-3-phosphoglycerate + ATP = (2R)-3-phospho-glyceroyl phosphate + ADP. Its pathway is carbohydrate degradation; glycolysis; pyruvate from D-glyceraldehyde 3-phosphate: step 2/5. The chain is Phosphoglycerate kinase from Lactobacillus delbrueckii subsp. bulgaricus (strain ATCC 11842 / DSM 20081 / BCRC 10696 / JCM 1002 / NBRC 13953 / NCIMB 11778 / NCTC 12712 / WDCM 00102 / Lb 14).